Reading from the N-terminus, the 334-residue chain is Ribosomal lysine N-methyltransferase 5 (334 aa).

Residues tryptophan 88, 155–157 (GAG), aspartate 177, tryptophan 227, and methionine 254 contribute to the S-adenosyl-L-methionine site.

Belongs to the class I-like SAM-binding methyltransferase superfamily. RKM5 family.

Its function is as follows. S-adenosyl-L-methionine-dependent protein-lysine N-methyltransferase that methylates 60S ribosomal protein L1. This is Ribosomal lysine N-methyltransferase 5 (RKM5) from Lachancea thermotolerans (strain ATCC 56472 / CBS 6340 / NRRL Y-8284) (Yeast).